The following is a 330-amino-acid chain: Flotillin-like protein FloA (330 aa).

2 helical membrane-spanning segments follow: residues 5-25 (IILPIIIIAAVLIALAILFTF) and 28-48 (VALWISALAAGVKISIFTLIG).

The protein belongs to the flotillin-like FloA family. In terms of assembly, homooligomerizes.

The protein resides in the cell membrane. Its subcellular location is the membrane raft. Its function is as follows. Found in functional membrane microdomains (FMM) that may be equivalent to eukaryotic membrane rafts. FMMs are highly dynamic and increase in number as cells age. Flotillins are thought to be important factors in membrane fluidity. The polypeptide is Flotillin-like protein FloA (Oceanobacillus iheyensis (strain DSM 14371 / CIP 107618 / JCM 11309 / KCTC 3954 / HTE831)).